A 297-amino-acid chain; its full sequence is Salivary glue protein Sgs-4 (297 aa).

The signal sequence occupies residues 1–21 (MRLELLVVLLVGLAALAPSGS). Tandem repeats lie at residues 26–32 (TEPPRCE), 33–39 (TEPPRCE), 40–46 (TEPPRCE), 47–53 (TEPPRCE), 54–60 (TEPPRCE), 61–67 (TTTPKCE), 68–74 (TTPPTCR), 75–81 (TEPPTCK), 82–88 (TEPPTCR), 89–95 (TEPPTCK), 96–102 (TKPPTCR), 103–109 (TEPPTCR), 110–116 (TEPPTCK), 117–123 (TKPPTCK), 124–130 (TEPPTCK), 131–137 (TEPPTCR), 138–144 (TEPPTCK), 145–151 (TEPPTCR), 152–158 (TEPPTCK), 159–165 (TEPPTCK), and 166–172 (TEPPTCK). Positions 26–84 (TEPPRCETEPPRCETEPPRCETEPPRCETEPPRCETTTPKCETTPPTCRTEPPTCKTEP) are disordered. The interval 26 to 179 (TEPPRCETEP…TCKTEPPCEK (154 aa)) is 22 X 7 AA approximate tandem repeats of T-[ETK]-[PT]-P-[RKT]-C-[ERK]. Basic and acidic residues predominate over residues 27-58 (EPPRCETEPPRCETEPPRCETEPPRCETEPPR). The span at 59-84 (CETTTPKCETTPPTCRTEPPTCKTEP) shows a compositional bias: low complexity. Low complexity predominate over residues 141 to 174 (PTCKTEPPTCRTEPPTCKTEPPTCKTEPPTCKTE). Disordered stretches follow at residues 141–218 (PTCK…SGCG) and 243–297 (PDSK…KGGC). Residues 173-179 (TEPPCEK) form a 22; approximate repeat. 2 stretches are compositionally biased toward basic residues: residues 181–208 (CTKRIKRHRTKRTKRSKSTKKIVHHHNR) and 282–291 (NTTKKPRKTQ).

In terms of tissue distribution, salivary gland.

The protein localises to the secreted. This Drosophila melanogaster (Fruit fly) protein is Salivary glue protein Sgs-4 (Sgs4).